Consider the following 666-residue polypeptide: Calpain-10 (666 aa).

Residues 13-321 enclose the Calpain catalytic domain; the sequence is LFRDAAFPAS…FDEVTIGYPV (309 aa). Active-site residues include cysteine 73, histidine 238, and asparagine 263. Domain III regions lie at residues 322–488 and 507–648; these read TEAG…ISLS and EWET…IHSQ.

It belongs to the peptidase C2 family. Ubiquitous.

The protein resides in the cytoplasm. It localises to the nucleus. Its function is as follows. Calcium-regulated non-lysosomal thiol-protease which catalyzes limited proteolysis of substrates involved in cytoskeletal remodeling and signal transduction. May play a role in insulin-stimulated glucose uptake. This chain is Calpain-10 (Capn10), found in Rattus norvegicus (Rat).